Consider the following 136-residue polypeptide: Cytochrome b5 (136 aa).

The 77-residue stretch at 5-81 (TKVFTLAEVS…LDEYYVGDID (77 aa)) folds into the Cytochrome b5 heme-binding domain. Histidine 40 and histidine 64 together coordinate heme. Residues 107–127 (FVVKLLQFLVPLIILGVAFGI) form a helical membrane-spanning segment.

It belongs to the cytochrome b5 family. Is highly expressed in developing seeds, moderately expressed in flowers, and is expressed at low levels in the leaf.

It localises to the endoplasmic reticulum membrane. The protein resides in the microsome membrane. Functionally, cytochrome b5 is a membrane bound hemoprotein which function as an electron carrier for several membrane bound oxygenases. May play a key role in the modification by desaturation of fatty acids in the endoplasmic reticulum, which in the developing seed is utilized for membrane synthesis and in the developmentally regulated production of large amounts of storage lipids. Is involved in the reduction of cytochrome P-450 and may therefore be involved in flavonoid biosynthesis in the petals. This is Cytochrome b5 from Nicotiana tabacum (Common tobacco).